We begin with the raw amino-acid sequence, 52 residues long: Large ribosomal subunit protein bL33 (52 aa).

This sequence belongs to the bacterial ribosomal protein bL33 family.

This is Large ribosomal subunit protein bL33 from Anaeromyxobacter dehalogenans (strain 2CP-C).